The chain runs to 540 residues: NEDD8-activating enzyme E1 regulatory subunit AXR1 (540 aa).

This sequence belongs to the ubiquitin-activating E1 family. ULA1 subfamily. In terms of assembly, heterodimer of ECR1 and AXR1. The complex binds to RUB1/NEDD8 and RCE1. Expressed in shoot, root and floral meristems, in vascular tissues of cotyledons and mature leaves, and in the stele of the root. Expressed at higher levels on the lower side of an emerging root during germination and at higher levels on the underside of the apical hook.

It is found in the nucleus. It participates in protein modification; protein neddylation. Functionally, regulatory subunit of the dimeric ECR1-AXR1 E1 enzyme. E1 activates RUB1/NEDD8 by first adenylating its C-terminal glycine residue with ATP, thereafter linking this residue to the side chain of the catalytic cysteine, yielding a RUB1-ECR1 thioester and free AMP. E1 finally transfers RUB1 to the catalytic cysteine of RCE1. Plays an important role in auxin response. Regulates the chromosomal localization of meiotic recombination by crossovers (COs) and subsequent synapsis, probably through the activation of a CRL4 complex. Required for E3-mediated protein degradation in response to auxin, jasmonic acid and cold stress. Required for the COP1-COP10-CSN-mediated repression of photomorphogenesis in the dark. May function redundantly with AXL1 in the RUB conjugating pathway. Seems not to be functionally equivalent to AXL1 in vivo. The polypeptide is NEDD8-activating enzyme E1 regulatory subunit AXR1 (Arabidopsis thaliana (Mouse-ear cress)).